We begin with the raw amino-acid sequence, 372 residues long: Dual-specificity RNA methyltransferase RlmN (372 aa).

The Proton acceptor role is filled by E94. The Radical SAM core domain maps to 100 to 339 (DGDRATLCVS…VTIRKTRGDD (240 aa)). The cysteines at positions 107 and 344 are disulfide-linked. [4Fe-4S] cluster contacts are provided by C114, C118, and C121. S-adenosyl-L-methionine is bound by residues 168–169 (GE), S200, 222–224 (SLH), and N301. C344 functions as the S-methylcysteine intermediate in the catalytic mechanism.

It belongs to the radical SAM superfamily. RlmN family. The cofactor is [4Fe-4S] cluster.

The protein localises to the cytoplasm. The enzyme catalyses adenosine(2503) in 23S rRNA + 2 reduced [2Fe-2S]-[ferredoxin] + 2 S-adenosyl-L-methionine = 2-methyladenosine(2503) in 23S rRNA + 5'-deoxyadenosine + L-methionine + 2 oxidized [2Fe-2S]-[ferredoxin] + S-adenosyl-L-homocysteine. It carries out the reaction adenosine(37) in tRNA + 2 reduced [2Fe-2S]-[ferredoxin] + 2 S-adenosyl-L-methionine = 2-methyladenosine(37) in tRNA + 5'-deoxyadenosine + L-methionine + 2 oxidized [2Fe-2S]-[ferredoxin] + S-adenosyl-L-homocysteine. Its function is as follows. Specifically methylates position 2 of adenine 2503 in 23S rRNA and position 2 of adenine 37 in tRNAs. m2A2503 modification seems to play a crucial role in the proofreading step occurring at the peptidyl transferase center and thus would serve to optimize ribosomal fidelity. The polypeptide is Dual-specificity RNA methyltransferase RlmN (Aliivibrio fischeri (strain MJ11) (Vibrio fischeri)).